The following is a 468-amino-acid chain: Argininosuccinate lyase (468 aa).

The protein belongs to the lyase 1 family. Argininosuccinate lyase subfamily.

The protein localises to the cytoplasm. The catalysed reaction is 2-(N(omega)-L-arginino)succinate = fumarate + L-arginine. The protein operates within amino-acid biosynthesis; L-arginine biosynthesis; L-arginine from L-ornithine and carbamoyl phosphate: step 3/3. The chain is Argininosuccinate lyase from Hahella chejuensis (strain KCTC 2396).